Reading from the N-terminus, the 482-residue chain is tRNA sulfurtransferase (482 aa).

In terms of domain architecture, THUMP spans Leu-61–Arg-165. Residues Leu-183–Ile-184, Lys-265, Gly-287, and Gln-296 each bind ATP. Cys-344 and Cys-456 are joined by a disulfide. The 79-residue stretch at Phe-404–Pro-482 folds into the Rhodanese domain. Catalysis depends on Cys-456, which acts as the Cysteine persulfide intermediate.

This sequence belongs to the ThiI family.

It localises to the cytoplasm. The catalysed reaction is [ThiI sulfur-carrier protein]-S-sulfanyl-L-cysteine + a uridine in tRNA + 2 reduced [2Fe-2S]-[ferredoxin] + ATP + H(+) = [ThiI sulfur-carrier protein]-L-cysteine + a 4-thiouridine in tRNA + 2 oxidized [2Fe-2S]-[ferredoxin] + AMP + diphosphate. It carries out the reaction [ThiS sulfur-carrier protein]-C-terminal Gly-Gly-AMP + S-sulfanyl-L-cysteinyl-[cysteine desulfurase] + AH2 = [ThiS sulfur-carrier protein]-C-terminal-Gly-aminoethanethioate + L-cysteinyl-[cysteine desulfurase] + A + AMP + 2 H(+). It participates in cofactor biosynthesis; thiamine diphosphate biosynthesis. Its function is as follows. Catalyzes the ATP-dependent transfer of a sulfur to tRNA to produce 4-thiouridine in position 8 of tRNAs, which functions as a near-UV photosensor. Also catalyzes the transfer of sulfur to the sulfur carrier protein ThiS, forming ThiS-thiocarboxylate. This is a step in the synthesis of thiazole, in the thiamine biosynthesis pathway. The sulfur is donated as persulfide by IscS. The chain is tRNA sulfurtransferase from Escherichia coli O45:K1 (strain S88 / ExPEC).